A 36-amino-acid chain; its full sequence is Photosystem I reaction center subunit VIII (36 aa).

A helical membrane pass occupies residues L6–L26.

Belongs to the PsaI family.

The protein resides in the plastid. It localises to the chloroplast thylakoid membrane. Functionally, may help in the organization of the PsaL subunit. This chain is Photosystem I reaction center subunit VIII, found in Drimys granadensis.